The following is a 148-amino-acid chain: MSMIITILNGPNLNFLGKREPEIYGTETLKDIEQFCKECATRLGVRIHFYQSNYEGQLVEWIQEAIGVSAGLIINPAAYSHTSVAILDALKMFTGTKVEVHLSHIYHREAFRHHSYTSAAVDAVIAGCGGDGYWLALEYIVKRFNRNK.

The active-site Proton acceptor is the Tyr-24. Substrate-binding residues include Asn-75, His-81, and Asp-88. His-101 functions as the Proton donor in the catalytic mechanism. Residues 102–103 (LS) and Arg-112 each bind substrate.

It belongs to the type-II 3-dehydroquinase family. In terms of assembly, homododecamer.

The enzyme catalyses 3-dehydroquinate = 3-dehydroshikimate + H2O. The protein operates within metabolic intermediate biosynthesis; chorismate biosynthesis; chorismate from D-erythrose 4-phosphate and phosphoenolpyruvate: step 3/7. Its function is as follows. Catalyzes a trans-dehydration via an enolate intermediate. The sequence is that of 3-dehydroquinate dehydratase from Bartonella henselae (strain ATCC 49882 / DSM 28221 / CCUG 30454 / Houston 1) (Rochalimaea henselae).